The primary structure comprises 354 residues: Guanine nucleotide-binding protein alpha-12 subunit (354 aa).

A G-alpha domain is found at 31-354 (QPLKLLLLGS…SLLMNVAEIL (324 aa)). The interval 34–47 (KLLLLGSGECGKST) is G1 motif. GTP contacts are provided by residues 39 to 46 (GSGECGKS), 178 to 184 (LRVRVKT), 203 to 207 (DVGGQ), 272 to 275 (NKID), and Ala329. Mg(2+) contacts are provided by Ser46 and Thr184. A G2 motif region spans residues 176–184 (DFLRVRVKT). Residues 199–208 (FKLVDVGGQK) are G3 motif. The G4 motif stretch occupies residues 268–275 (VLFFNKID). The tract at residues 327–332 (TCALDS) is G5 motif.

It belongs to the G-alpha family. As to quaternary structure, g proteins are composed of 3 units; alpha, beta and gamma. The alpha chain contains the guanine nucleotide binding site.

Functionally, guanine nucleotide-binding proteins (G proteins) are involved as modulators or transducers in various transmembrane signaling systems. The sequence is that of Guanine nucleotide-binding protein alpha-12 subunit (gpaL) from Dictyostelium discoideum (Social amoeba).